Consider the following 359-residue polypeptide: MSYRRELEKYRDLDEDEILGALTEEELRTLENELDELDPDNALLPAGLRQKDQTTKAPTGPFKREELLDHLEKQAKEFKDREDLVPYTGEKRGKIWVPKQKPMDPVLESVTLEPELEEALANASDAELCDIAAILGMHTLMSNQQYYQALGSSSIVNKEGLNSVIKPTQYKPVPDEEPNPTDVEETLERIKNNDPELEEVNLNNIRNIPIPTLKAYAESLKENSYVKKFSIVGTRSNDPVAFALAEMLKVNKVLKTLNVESNFISGAGILCLVEALPHNTSLVELKIDNQSQPLGNKVEMEIVNMLEKNTTLLKFGYHFTQQGPRLRASNAMMNNNDLVRKRRLADLTGPIIPKCRSGV.

Positions 36-61 (ELDPDNALLPAGLRQKDQTTKAPTGP) are disordered. The tract at residues 39-138 (PDNALLPAGL…CDIAAILGMH (100 aa)) is tropomyosin-binding.

It belongs to the tropomodulin family. As to quaternary structure, binds to the N-terminus of tropomyosin and to actin. Interacts with FLII.

The protein resides in the cytoplasm. It localises to the cytoskeleton. In terms of biological role, blocks the elongation and depolymerization of the actin filaments at the pointed end. The Tmod/TM complex contributes to the formation of the short actin protofilament, which in turn defines the geometry of the membrane skeleton. This is Tropomodulin-1 (Tmod1) from Rattus norvegicus (Rat).